An 803-amino-acid chain; its full sequence is Na(+)/H(+) antiporter subunit A1 (803 aa).

19 helical membrane passes run 1 to 21 (MSLLHIAVILPLIFALIIPIL), 30 to 50 (LGWFVLPIPVVLFIYFLSLIS), 79 to 99 (LSILFSLLITGIGSLVVLYSI), 117 to 137 (LFMGAMLGVVLSDNLIILYLF), 166 to 186 (LIITVFGGLSLLGGFILISLA), 208 to 228 (FIFAMVLIMLGAFTKSAQVPF), 265 to 285 (LFAISQGWIWTITLVGLITLF), 300 to 320 (ILAFSTVSQLGMIMSMLGIGA), 337 to 357 (FTAAVFHLVNHATFKGALFMI), 377 to 397 (LTIMPISFTITVITALSMAGI), 427 to 447 (LGIVFPILAIVGSIFTFVYSI), 472 to 492 (ILMLLSPIILAVLVVVFGLFP), 522 to 542 (GITPAFISTLIIWILGILLLL), 591 to 611 (LVIIFGMLIVVTIVTLLSVPF), 621 to 641 (IHIYEIAILILLIIAAFMVVI), 646 to 666 (LFSVIMLGVVGYSVSVLFVFF), 671 to 691 (LALTQFVVESISTALFLLCFY), 707 to 727 (LTNALISIGVGLVVIILGLIA), and 764 to 784 (MDTLFESSVLGIAGLGVYTMI).

This sequence belongs to the CPA3 antiporters (TC 2.A.63) subunit A family. As to quaternary structure, may form a heterooligomeric complex that consists of seven subunits: mnhA1, mnhB1, mnhC1, mnhD1, mnhE1, mnhF1 and mnhG1.

It is found in the cell membrane. Functionally, mnh complex is a Na(+)/H(+) antiporter involved in Na(+) excretion. This is Na(+)/H(+) antiporter subunit A1 (mnhA1) from Staphylococcus haemolyticus (strain JCSC1435).